Here is a 547-residue protein sequence, read N- to C-terminus: Chaperonin GroEL (547 aa).

ATP is bound by residues 30-33 (TLGP), K51, 87-91 (DGTTT), G415, 479-481 (NAA), and D495.

This sequence belongs to the chaperonin (HSP60) family. As to quaternary structure, forms a cylinder of 14 subunits composed of two heptameric rings stacked back-to-back. Interacts with the co-chaperonin GroES.

It is found in the cytoplasm. The enzyme catalyses ATP + H2O + a folded polypeptide = ADP + phosphate + an unfolded polypeptide.. In terms of biological role, together with its co-chaperonin GroES, plays an essential role in assisting protein folding. The GroEL-GroES system forms a nano-cage that allows encapsulation of the non-native substrate proteins and provides a physical environment optimized to promote and accelerate protein folding. In Marinomonas sp. (strain MWYL1), this protein is Chaperonin GroEL.